We begin with the raw amino-acid sequence, 149 residues long: Endoribonuclease YbeY (149 aa).

Residues His-112, His-116, and His-122 each contribute to the Zn(2+) site.

This sequence belongs to the endoribonuclease YbeY family. The cofactor is Zn(2+).

Its subcellular location is the cytoplasm. Its function is as follows. Single strand-specific metallo-endoribonuclease involved in late-stage 70S ribosome quality control and in maturation of the 3' terminus of the 16S rRNA. In Methylibium petroleiphilum (strain ATCC BAA-1232 / LMG 22953 / PM1), this protein is Endoribonuclease YbeY.